We begin with the raw amino-acid sequence, 215 residues long: MNLVGSYAHHHHHHHPHPAHPMLHEPFLFGPASRCHQERPYFQSWLLSPADAAPDFPTGGPPPTAAAAAATYGPDTRPGQSPGRLEALGGRLGRRKGSGPKKERRRTESINSAFAELRECIPNVPADTKLSKIKTLRLATSYIAYLMDVLAKDAQAGDPEAFKAELKKVDGGRESKRKRELQQHEGFPPALGPGEKRIKGRTGWPQQVWALELNQ.

2 disordered regions span residues 53–109 and 169–202; these read APDF…RTES and VDGGRESKRKRELQQHEGFPPALGPGEKRIKGRT. Positions 65-75 are enriched in low complexity; sequence AAAAAATYGPD. Residues 92 to 104 show a composition bias toward basic residues; it reads LGRRKGSGPKKER. In terms of domain architecture, bHLH spans 94–146; sequence RRKGSGPKKERRRTESINSAFAELRECIPNVPADTKLSKIKTLRLATSYIAYL. Threonine 107 carries the phosphothreonine; by PLK4 modification. Phosphoserine; by PLK4 is present on serine 109.

Efficient DNA binding requires dimerization with another bHLH protein. Forms homodimers and heterodimers with TCF3 gene products E12 and E47, HAND2 and HEY1, HEY2 and HEYL (hairy-related transcription factors). Interacts with MDFIC. Interacts with SOX15; the interaction enhances HAND1-induced differentiation of trophoblast giant cells. Post-translationally, phosphorylation by PLK4 disrupts the interaction with MDFIC and leads to translocation into the nucleoplasm, allowing dimerization and transcription factor activity.

The protein resides in the nucleus. It is found in the nucleoplasm. The protein localises to the nucleolus. Transcription factor that plays an essential role in both trophoblast giant cell differentiation and in cardiac morphogenesis. Binds the DNA sequence 5'-NRTCTG-3' (non-canonical E-box). Acts as a transcriptional repressor of SOX15. In the adult, could be required for ongoing expression of cardiac-specific genes. This is Heart- and neural crest derivatives-expressed protein 1 (HAND1) from Oryctolagus cuniculus (Rabbit).